Consider the following 274-residue polypeptide: Thiamine kinase (274 aa).

Belongs to the thiamine kinase family.

The catalysed reaction is thiamine + ATP = thiamine phosphate + ADP + H(+). It functions in the pathway cofactor biosynthesis; thiamine diphosphate biosynthesis; thiamine phosphate from thiamine: step 1/1. Functionally, catalyzes the ATP-dependent phosphorylation of thiamine to thiamine phosphate. Is involved in thiamine salvage. This chain is Thiamine kinase, found in Escherichia coli (strain SMS-3-5 / SECEC).